The primary structure comprises 675 residues: Myosin-binding protein 3 (675 aa).

Residues 17–37 (ITVILVYAFLEWLLMFFIFLN) form a helical membrane-spanning segment. 2 disordered regions span residues 225–274 (LRSI…EEET) and 286–315 (SKNFTGSQIEEEEEDREETTKELDPETPTS). The segment covering 238–251 (AKSRVSEDEQRNDD) has biased composition (basic and acidic residues). The region spanning 355–453 (RTIERLRETV…QLQRELEVYR (99 aa)) is the GTD-binding domain. Acidic residues predominate over residues 474-496 (CEADDDDKEEENREEDNSSEMDV). 3 disordered regions span residues 474–497 (CEADDDDKEEENREEDNSSEMDVD), 542–565 (DKESAEDPGEFSNSYEEASNGHGG), and 582–605 (AENESEDGSQGLPESDEKNFGSDS). The segment covering 596–605 (SDEKNFGSDS) has biased composition (basic and acidic residues). Positions 605–633 (SEKLEIIKQVDSVYERLQELETDGEFLKN) form a coiled coil.

Interacts with myosin XI-K.

Its subcellular location is the membrane. Functionally, membrane-anchored myosin receptors that define a distinct, plant-specific transport vesicle compartment. The protein is Myosin-binding protein 3 of Arabidopsis thaliana (Mouse-ear cress).